The following is a 368-amino-acid chain: Phosphate acyltransferase (368 aa).

It belongs to the PlsX family. Homodimer. Probably interacts with PlsY.

The protein resides in the cytoplasm. The enzyme catalyses a fatty acyl-[ACP] + phosphate = an acyl phosphate + holo-[ACP]. It participates in lipid metabolism; phospholipid metabolism. In terms of biological role, catalyzes the reversible formation of acyl-phosphate (acyl-PO(4)) from acyl-[acyl-carrier-protein] (acyl-ACP). This enzyme utilizes acyl-ACP as fatty acyl donor, but not acyl-CoA. The sequence is that of Phosphate acyltransferase from Methylibium petroleiphilum (strain ATCC BAA-1232 / LMG 22953 / PM1).